The chain runs to 70 residues: Small ribosomal subunit protein bS18c (70 aa).

It belongs to the bacterial ribosomal protein bS18 family. Part of the 30S ribosomal subunit.

It is found in the plastid. The protein resides in the chloroplast. The chain is Small ribosomal subunit protein bS18c from Pyropia yezoensis (Susabi-nori).